Here is a 113-residue protein sequence, read N- to C-terminus: Large ribosomal subunit protein bL19 (113 aa).

This sequence belongs to the bacterial ribosomal protein bL19 family.

In terms of biological role, this protein is located at the 30S-50S ribosomal subunit interface and may play a role in the structure and function of the aminoacyl-tRNA binding site. This chain is Large ribosomal subunit protein bL19, found in Mycobacterium avium (strain 104).